Here is a 392-residue protein sequence, read N- to C-terminus: L-rhamnonate dehydratase (392 aa).

Positions 22 and 48 each coordinate substrate. The Mg(2+) site is built by aspartate 214, glutamate 240, and glutamate 268. Histidine 318 acts as the Proton acceptor in catalysis. Glutamate 338 is a binding site for substrate.

It belongs to the mandelate racemase/muconate lactonizing enzyme family. RhamD subfamily. Homooctamer; tetramer of dimers. It depends on Mg(2+) as a cofactor.

It catalyses the reaction L-rhamnonate = 2-dehydro-3-deoxy-L-rhamnonate + H2O. Catalyzes the dehydration of L-rhamnonate to 2-keto-3-deoxy-L-rhamnonate (KDR). This Burkholderia ambifaria (strain ATCC BAA-244 / DSM 16087 / CCUG 44356 / LMG 19182 / AMMD) (Burkholderia cepacia (strain AMMD)) protein is L-rhamnonate dehydratase.